The sequence spans 26 residues: Bifunctional protein PutA (26 aa).

The tract at residues 1-26 (MGTTTMGVKLDDATRERIKSAASRID) is disordered. Over residues 9–26 (KLDDATRERIKSAASRID) the composition is skewed to basic and acidic residues.

FAD serves as cofactor.

It catalyses the reaction L-proline + a quinone = (S)-1-pyrroline-5-carboxylate + a quinol + H(+). It carries out the reaction L-glutamate 5-semialdehyde + NAD(+) + H2O = L-glutamate + NADH + 2 H(+). Its pathway is amino-acid degradation; L-proline degradation into L-glutamate; L-glutamate from L-proline: step 1/2. It participates in amino-acid degradation; L-proline degradation into L-glutamate; L-glutamate from L-proline: step 2/2. Oxidizes proline to glutamate for use as a carbon and nitrogen source and also function as a transcriptional repressor of the put operon. The protein is Bifunctional protein PutA (putA) of Klebsiella pneumoniae.